The sequence spans 129 residues: MDLDIKEIVKNMDLKFRNIEGKKLLLAISTDKSGKVLMTAFMSEESLEKSIETGFMHYYSTSRDKLWRKGEESGNVQKIINVFRDCDGDALLFTVEQTGWACHEGYMSCFHNKIDLSTGKSTVVGNKLD.

Asp-85 lines the Mg(2+) pocket. Cys-86 serves as a coordination point for Zn(2+). The Mg(2+) site is built by Asp-87 and Asp-89. Cys-102 and Cys-109 together coordinate Zn(2+).

The protein belongs to the PRA-CH family. Homodimer. It depends on Mg(2+) as a cofactor. The cofactor is Zn(2+).

It is found in the cytoplasm. It catalyses the reaction 1-(5-phospho-beta-D-ribosyl)-5'-AMP + H2O = 1-(5-phospho-beta-D-ribosyl)-5-[(5-phospho-beta-D-ribosylamino)methylideneamino]imidazole-4-carboxamide. It participates in amino-acid biosynthesis; L-histidine biosynthesis; L-histidine from 5-phospho-alpha-D-ribose 1-diphosphate: step 3/9. Functionally, catalyzes the hydrolysis of the adenine ring of phosphoribosyl-AMP. The polypeptide is Phosphoribosyl-AMP cyclohydrolase (Methanococcus maripaludis (strain C5 / ATCC BAA-1333)).